The primary structure comprises 401 residues: S-adenosylmethionine synthase (401 aa).

His-16 contributes to the ATP binding site. Asp-18 serves as a coordination point for Mg(2+). Glu-44 lines the K(+) pocket. Residues Glu-57 and Gln-100 each contribute to the L-methionine site. The segment at 100–110 (QSPDIAQGVNE) is flexible loop. ATP-binding positions include 174–176 (DAK), 241–242 (RF), Asp-250, 256–257 (RK), Ala-273, and Lys-277. Position 250 (Asp-250) interacts with L-methionine. An L-methionine-binding site is contributed by Lys-281.

Belongs to the AdoMet synthase family. Homotetramer; dimer of dimers. The cofactor is Mg(2+). It depends on K(+) as a cofactor.

Its subcellular location is the cytoplasm. The catalysed reaction is L-methionine + ATP + H2O = S-adenosyl-L-methionine + phosphate + diphosphate. The protein operates within amino-acid biosynthesis; S-adenosyl-L-methionine biosynthesis; S-adenosyl-L-methionine from L-methionine: step 1/1. In terms of biological role, catalyzes the formation of S-adenosylmethionine (AdoMet) from methionine and ATP. The overall synthetic reaction is composed of two sequential steps, AdoMet formation and the subsequent tripolyphosphate hydrolysis which occurs prior to release of AdoMet from the enzyme. This chain is S-adenosylmethionine synthase, found in Streptococcus equi subsp. zooepidemicus (strain MGCS10565).